We begin with the raw amino-acid sequence, 419 residues long: UDP-N-acetylglucosamine 1-carboxyvinyltransferase (419 aa).

Position 22 to 23 (22 to 23 (KN)) interacts with phosphoenolpyruvate. R93 lines the UDP-N-acetyl-alpha-D-glucosamine pocket. The active-site Proton donor is the C117. C117 carries the 2-(S-cysteinyl)pyruvic acid O-phosphothioketal modification. Positions 307 and 329 each coordinate UDP-N-acetyl-alpha-D-glucosamine.

This sequence belongs to the EPSP synthase family. MurA subfamily.

Its subcellular location is the cytoplasm. The enzyme catalyses phosphoenolpyruvate + UDP-N-acetyl-alpha-D-glucosamine = UDP-N-acetyl-3-O-(1-carboxyvinyl)-alpha-D-glucosamine + phosphate. It functions in the pathway cell wall biogenesis; peptidoglycan biosynthesis. Its function is as follows. Cell wall formation. Adds enolpyruvyl to UDP-N-acetylglucosamine. The sequence is that of UDP-N-acetylglucosamine 1-carboxyvinyltransferase from Shewanella woodyi (strain ATCC 51908 / MS32).